A 63-amino-acid chain; its full sequence is Large ribosomal subunit protein uL30 (63 aa).

Belongs to the universal ribosomal protein uL30 family. Part of the 50S ribosomal subunit.

In Rickettsia felis (strain ATCC VR-1525 / URRWXCal2) (Rickettsia azadi), this protein is Large ribosomal subunit protein uL30.